A 142-amino-acid chain; its full sequence is Hemoglobin larval subunit alpha (142 aa).

The Globin domain occupies 2 to 142 (VLSAEEKALV…VSAVLTSKYR (141 aa)). O2 is bound at residue H59. H88 serves as a coordination point for heme b.

This sequence belongs to the globin family. In terms of assembly, heterotetramer of two alpha chains and two beta chains. Red blood cells.

Functionally, involved in oxygen transport from the lung to the various peripheral tissues. This is Hemoglobin larval subunit alpha from Pleurodeles waltl (Iberian ribbed newt).